The primary structure comprises 341 residues: MIISYKCPNCGSDMAFDSETGSLSCSSCGRQDNIESLPKENIAARFSDDEAKEYQCKNCGAVLITEAETTATTCSFCGGAAILADRLSGHLAPAKVIPFTISKQEAEQAFRKWCKKGLLTPRGFMSADRIKSITGMYIPFWMFDLNSEVQVRANCTRVHQYEEGDYICTETEHFEAFRDINLDYLKIPVDASEKMKDELMDKLEPYSYEELKDFQTAYLAGYIAEKYNYTDEELFPRAKEKISSYIDSYIHSTFSGYTSVNVRDKHIHTKNVNSFYVLLPVWMVSYDYERAEHIFAMNGQTGKVVGKPPISRGKVAAWFSGIAGGTFLALKLVSLMMGGGF.

Residues 315–337 (VAAWFSGIAGGTFLALKLVSLMM) traverse the membrane as a helical segment.

The protein localises to the cell membrane. This is an uncharacterized protein from Bacillus subtilis (strain 168).